We begin with the raw amino-acid sequence, 368 residues long: MSLFPPASCPRLIVKIGSALLVDPGGAVRRDWLTGIAADIAERARAGQQVAVVSSGAIALGARRLGLAKGGRASLEDAQAAAATGQIALSQVWAEVLGAEGLTAAQMLVTLGDLEHRRRYLNAAATLDRLLSLGVVPIINENDSVATEEIRFGDNDRLAARVAQAAAARGVILLSDIDGLYDRNPAQPGAVHIERIERIDAAIEAMADTGSASGMGSGGMVSKIAAARIANAAGAHLAIASGRIDRPLSTAARHSLFVAERGASARKAWLAGGLTAEGRLTIDAGAVKALVGGASLLAAGVTAVSGSFARGDILDIVGPDGRVVARGLSEYPAADAAAIVGLGRDAQEAALGYAPRSAIVHRDHMVLL.

An ATP-binding site is contributed by lysine 15. Residues serine 55, aspartate 143, and asparagine 155 each contribute to the substrate site. Residues 175-176 (SD) and 217-223 (SGGMVSK) each bind ATP. A PUA domain is found at 277–354 (EGRLTIDAGA…DAQEAALGYA (78 aa)).

This sequence belongs to the glutamate 5-kinase family.

Its subcellular location is the cytoplasm. The catalysed reaction is L-glutamate + ATP = L-glutamyl 5-phosphate + ADP. Its pathway is amino-acid biosynthesis; L-proline biosynthesis; L-glutamate 5-semialdehyde from L-glutamate: step 1/2. Functionally, catalyzes the transfer of a phosphate group to glutamate to form L-glutamate 5-phosphate. The protein is Glutamate 5-kinase of Sphingopyxis alaskensis (strain DSM 13593 / LMG 18877 / RB2256) (Sphingomonas alaskensis).